Consider the following 190-residue polypeptide: Large ribosomal subunit protein uL22 (190 aa).

A disordered region spans residues 111-190; sequence SVQSTKAKAK…TKKKTEGEEK (80 aa). Positions 125–147 are enriched in basic and acidic residues; it reads IKSEDSKNSLKVTESKADSKVDA. Low complexity predominate over residues 167 to 178; the sequence is AKVATTKSTATR.

Belongs to the universal ribosomal protein uL22 family. Part of the 50S ribosomal subunit.

In terms of biological role, this protein binds specifically to 23S rRNA; its binding is stimulated by other ribosomal proteins, e.g. L4, L17, and L20. It is important during the early stages of 50S assembly. It makes multiple contacts with different domains of the 23S rRNA in the assembled 50S subunit and ribosome. Functionally, the globular domain of the protein is located near the polypeptide exit tunnel on the outside of the subunit, while an extended beta-hairpin is found that lines the wall of the exit tunnel in the center of the 70S ribosome. The chain is Large ribosomal subunit protein uL22 from Helicobacter hepaticus (strain ATCC 51449 / 3B1).